The primary structure comprises 443 residues: Probable glutamate dehydrogenase (443 aa).

Residue lysine 86 is part of the active site.

It belongs to the Glu/Leu/Phe/Val dehydrogenases family.

It carries out the reaction L-glutamate + NAD(+) + H2O = 2-oxoglutarate + NH4(+) + NADH + H(+). The enzyme catalyses L-glutamate + NADP(+) + H2O = 2-oxoglutarate + NH4(+) + NADPH + H(+). This chain is Probable glutamate dehydrogenase, found in Sinorhizobium fredii (strain NBRC 101917 / NGR234).